The primary structure comprises 583 residues: Multidrug transporter QDR2 (583 aa).

Positions 23–46 (EKYDGPDLSEVDSEDNDKMIKTNE) are disordered. N-linked (GlcNAc...) asparagine glycosylation is present at N60. Residues 88–108 (AYTGLFSTMAGAIYYPVLSVI) form a helical membrane-spanning segment. N120 is a glycosylation site (N-linked (GlcNAc...) asparagine). Helical transmembrane passes span 121–141 (ITVVVYFIFQGIAPTLMGGLA), 148–168 (PVVLFAVTVYFGACIGLACAQ), 178–198 (CLQAAGISPVIAINSGIIGDV), 208–228 (VGYISGFQVLGSAFGALIGAG), and 238–258 (IFWFLAIGSGVCLVFSIIMLP). N-linked (GlcNAc...) asparagine glycosylation occurs at N267. A run of 2 helical transmembrane segments spans residues 323–342 (ILLVTAGIQFATWSTHQTAL) and 354–374 (VAKIGLCYLPTGICTLISIVT). N380 carries an N-linked (GlcNAc...) asparagine glycan. The next 4 membrane-spanning stretches (helical) occupy residues 432–452 (HAAFVTLLLSSSGFVAFGWCI), 458–478 (LASVLVMSGFASLFSNCILTF), 493–513 (TATGCLNLFRCLLSALFIGCL), and 524–544 (GVFTFLGALTALSACPLFYLL).

This sequence belongs to the major facilitator superfamily. CAR1 family.

Its subcellular location is the cell membrane. Functionally, multidrug resistance transporter involved in resistance to the antifungal drugs miconazole, tioconazole, clotrimazole, and ketoconazole; as well as to quinidine. Decreases the intracellular accumulation of clotrimazole in and plays a role in the extrusion of this antifungal from preloaded cells. This chain is Multidrug transporter QDR2, found in Candida glabrata (strain ATCC 2001 / BCRC 20586 / JCM 3761 / NBRC 0622 / NRRL Y-65 / CBS 138) (Yeast).